The primary structure comprises 278 residues: Putative cuticle collagen 91 (278 aa).

Disordered regions lie at residues 84–109 and 140–278; these read LAKN…GVDG and GPAG…SVRQ. Residues 89-98 show a composition bias toward pro residues; sequence PPGPPGPPGA. 3 triple-helical region regions span residues 91–120, 137–199, and 202–264; these read GPPG…DGVA, GEAG…NGQR, and GTPG…PGPD. Residues 99–109 show a composition bias toward low complexity; the sequence is PGAAGEPGVDG. Residues 158 to 167 show a composition bias toward gly residues; the sequence is GADGQGGAPG. Low complexity-rich tracts occupy residues 172–228 and 236–245; these read EGPA…AGAP and APGVDGQPGA.

This sequence belongs to the cuticular collagen family. Collagen polypeptide chains are complexed within the cuticle by disulfide bonds and other types of covalent cross-links.

Nematode cuticles are composed largely of collagen-like proteins. The cuticle functions both as an exoskeleton and as a barrier to protect the worm from its environment. The polypeptide is Putative cuticle collagen 91 (col-91) (Caenorhabditis elegans).